The sequence spans 188 residues: Elongation factor P-like protein (188 aa).

This sequence belongs to the elongation factor P family.

The sequence is that of Elongation factor P-like protein from Stenotrophomonas maltophilia (strain K279a).